A 22-amino-acid chain; its full sequence is Bacteriocin serracin-P 23 kDa subunit (22 aa).

Functionally, major component of a prophage tail tube. In terms of biological role, antibacterial activity against Gram-negative bacterium E.amylovora. The polypeptide is Bacteriocin serracin-P 23 kDa subunit (Serratia plymuthica).